A 338-amino-acid chain; its full sequence is NADPH dehydrogenase (338 aa).

Tyr-28 lines the substrate pocket. FMN-binding residues include Ala-60 and Gln-102. 164 to 167 contacts substrate; that stretch reads HAAH. FMN contacts are provided by residues Arg-215 and 307 to 308; that span reads AR.

This sequence belongs to the NADH:flavin oxidoreductase/NADH oxidase family. NamA subfamily. Homotetramer. FMN serves as cofactor.

It catalyses the reaction A + NADPH + H(+) = AH2 + NADP(+). Its function is as follows. Catalyzes the reduction of the double bond of an array of alpha,beta-unsaturated aldehydes and ketones. It also reduces the nitro group of nitroester and nitroaromatic compounds. It could have a role in detoxification processes. The chain is NADPH dehydrogenase from Bacillus velezensis (strain DSM 23117 / BGSC 10A6 / LMG 26770 / FZB42) (Bacillus amyloliquefaciens subsp. plantarum).